The sequence spans 209 residues: Kynurenine formamidase (209 aa).

A substrate-binding site is contributed by Phe-19. Zn(2+) is bound by residues His-49, His-53, and Asp-55. Catalysis depends on His-59, which acts as the Proton donor/acceptor. Zn(2+) is bound by residues His-160 and Glu-172.

The protein belongs to the Cyclase 1 superfamily. KynB family. As to quaternary structure, homodimer. Zn(2+) serves as cofactor.

It carries out the reaction N-formyl-L-kynurenine + H2O = L-kynurenine + formate + H(+). Its pathway is amino-acid degradation; L-tryptophan degradation via kynurenine pathway; L-kynurenine from L-tryptophan: step 2/2. Its function is as follows. Catalyzes the hydrolysis of N-formyl-L-kynurenine to L-kynurenine, the second step in the kynurenine pathway of tryptophan degradation. The sequence is that of Kynurenine formamidase from Delftia acidovorans (strain DSM 14801 / SPH-1).